A 431-amino-acid polypeptide reads, in one-letter code: Selenocysteine lyase (431 aa).

K239 carries the N6-(pyridoxal phosphate)lysine modification. Residue C367 is the S-selanylcysteine intermediate of the active site.

This sequence belongs to the class-V pyridoxal-phosphate-dependent aminotransferase family. Homodimer. Pyridoxal 5'-phosphate serves as cofactor.

The protein resides in the cytoplasm. The protein localises to the cytosol. It catalyses the reaction L-selenocysteine + AH2 = hydrogenselenide + L-alanine + A + H(+). Functionally, catalyzes the decomposition of L-selenocysteine to L-alanine and elemental selenium. This chain is Selenocysteine lyase (scly), found in Xenopus tropicalis (Western clawed frog).